Here is a 274-residue protein sequence, read N- to C-terminus: NH(3)-dependent NAD(+) synthetase (274 aa).

46-53 (GISGGQDS) is a binding site for ATP. Mg(2+) is bound at residue Asp-52. Arg-140 contacts deamido-NAD(+). Thr-160 lines the ATP pocket. Glu-165 is a binding site for Mg(2+). Positions 173 and 180 each coordinate deamido-NAD(+). Lys-189 and Thr-211 together coordinate ATP. 260-261 (HK) provides a ligand contact to deamido-NAD(+).

The protein belongs to the NAD synthetase family. Homodimer.

It catalyses the reaction deamido-NAD(+) + NH4(+) + ATP = AMP + diphosphate + NAD(+) + H(+). Its pathway is cofactor biosynthesis; NAD(+) biosynthesis; NAD(+) from deamido-NAD(+) (ammonia route): step 1/1. Its function is as follows. Catalyzes the ATP-dependent amidation of deamido-NAD to form NAD. Uses ammonia as a nitrogen source. The sequence is that of NH(3)-dependent NAD(+) synthetase from Streptococcus equi subsp. zooepidemicus (strain H70).